A 1061-amino-acid chain; its full sequence is E3 SUMO-protein ligase ZNF451 (1061 aa).

Residues 1–38 (MGDPGSEIIESVPPAGPEASESTTDENEDDIQFVSEGP) are disordered. Residues 1 to 246 (MGDPGSEIIE…TDDGHNNNLL (246 aa)) form a sufficient for E3 SUMO-protein ligase activity region. The tract at residues 1 to 344 (MGDPGSEIIE…RVHCRNAGPV (344 aa)) is important for interaction with SUMO1 and SUMO2. The tract at residues 30–37 (DIQFVSEG) is interaction with SUMO2 1. A PLRP motif is present at residues 38–41 (PLRP). The interaction with SUMO2 2 stretch occupies residues 42 to 50 (VLEYIDLVS). Glycyl lysine isopeptide (Lys-Gly) (interchain with G-Cter in SUMO2) cross-links involve residues Lys75, Lys77, Lys106, Ile121, Ala130, Leu138, Lys139, Lys144, and Lys153. A Phosphoserine modification is found at Ser155. At Arg158 the chain carries Omega-N-methylarginine. Glycyl lysine isopeptide (Lys-Gly) (interchain with G-Cter in SUMO2) cross-links involve residues Val164 and Lys167. Residues 168-525 (PILCPIMHCN…HMSRIHGGAH (358 aa)) are important for interaction with SMAD4. The C2H2-type 1 zinc finger occupies 169-195 (ILCPIMHCNKEFDNGHLLLGHLKRFDH). Residues Gln226, Gly240, Pro247, Ser263, Lys270, Lys275, Lys283, Asp286, Lys288, Pro293, Lys301, and Lys309 each participate in a glycyl lysine isopeptide (Lys-Gly) (interchain with G-Cter in SUMO2) cross-link. A C2H2-type 2 zinc finger spans residues 253-277 (FACPNCFLLFSRKEECSKHMSGKNH). The C2H2-type 3 zinc finger occupies 315–337 (VKCVACHKTLRSHMELTAHFRVH). A Glycyl lysine isopeptide (Lys-Gly) (interchain with G-Cter in SUMO2) cross-link involves residue Lys357. A C2H2-type 4 zinc finger spans residues 362-386 (GYCPDCNQVFVDETSTQNHKQNSGH). Lys423 participates in a covalent cross-link: Glycyl lysine isopeptide (Lys-Gly) (interchain with G-Cter in SUMO2). Ser432 bears the Phosphoserine mark. Residues Lys434, Lys446, Lys452, Lys454, Lys464, Phe473, Val490, Cys500, Lys505, Asp508, Gly522, Trp532, Lys543, and Lys585 each participate in a glycyl lysine isopeptide (Lys-Gly) (interchain with G-Cter in SUMO2) cross-link. Residues 498-521 (YKCVVCGKVCDDSGVIRLHMSRIH) form a C2H2-type 5 zinc finger. The C2H2-type 6 zinc finger occupies 531–554 (FWCRTCKKELTRKDTIMAHVTEFH). A C2H2-type 7; atypical zinc finger spans residues 606–631 (WQCRICEDMFDSQEYVKQHCMSLASH). Residues Lys632, Lys647, and Lys664 each participate in a glycyl lysine isopeptide (Lys-Gly) (interchain with G-Cter in SUMO2) cross-link. The segment at 636–659 (YSCAHCRKPFHKIETLYRHCQDEH) adopts a C2H2-type 8 zinc-finger fold. The C2H2-type 9 zinc-finger motif lies at 667–690 (YFCGLCDLIFNVEEAFLSHYEEHH). Residue Lys706 forms a Glycyl lysine isopeptide (Lys-Gly) (interchain with G-Cter in SUMO1); alternate linkage. A Glycyl lysine isopeptide (Lys-Gly) (interchain with G-Cter in SUMO2); alternate cross-link involves residue Lys706. Residues Lys731 and Lys748 each participate in a glycyl lysine isopeptide (Lys-Gly) (interchain with G-Cter in SUMO2) cross-link. The C2H2-type 10 zinc-finger motif lies at 753 to 776 (FRCSLCSATAQNLTDMNTHIHQVH). Residues Lys777, Lys779, Lys790, Lys817, Lys827, Lys832, Lys843, Lys845, Lys852, Lys951, Lys992, and Lys993 each participate in a glycyl lysine isopeptide (Lys-Gly) (interchain with G-Cter in SUMO2) cross-link. The C2H2-type 11 zinc-finger motif lies at 789–812 (IKCGTCTKAFHDPESAQQHFHRKH). The segment at 1050–1061 (LEEAIRRSLEEM) is important for ubiquitin binding.

Belongs to the krueppel C2H2-type zinc-finger protein family. As to quaternary structure, homooligomer. Interacts (via N-terminal region) with SUMO1. Interacts (via N-terminal region) with SUMO2. Interacts simultaneously with two SUMO2 chains. Identified in a complex with SUMO2 and UBE2I/UBC9, where one ZNF451 interacts with one UBE2I/UBC9 and two SUMO2 chains, one bound to the UBE2I/UBC9 active site and the other to another region of the same UBE2I/UBC9 molecule. Interacts (via C-terminus) with ubiquitin. Interacts (via N-terminal zinc-finger domains) with SMAD4 (via MH2 domain). Interacts with SMAD2 and SMAD3. Identified in a complex that contains at least ZNF451, SMAD2, SMAD3 and SMAD4. Interacts with EP300. Inhibits interaction between EP300 and the SMAD4 complex. Interacts with SIMC1. Post-translationally, sumoylated. Predominantly sumoylated on the N-terminal region that is important for interaction with SUMO1 and SUMO2. Sumoylation is important for localization in nuclear granules; desumoylation leads to diffuse nucleoplasmic location. Autosumoylated (in vitro). Sumoylation enhances E3 SUMO-protein ligase activity.

It is found in the nucleus. The protein localises to the PML body. The protein resides in the nucleoplasm. The protein operates within protein modification; protein sumoylation. E3 SUMO-protein ligase; has a preference for SUMO2 and SUMO3 and facilitates UBE2I/UBC9-mediated sumoylation of target proteins. Plays a role in protein SUMO2 modification in response to stress caused by DNA damage and by proteasome inhibitors (in vitro). Required for MCM4 sumoylation. Has no activity with SUMO1. Preferentially transfers an additional SUMO2 chain onto the SUMO2 consensus site 'Lys-11'. Negatively regulates transcriptional activation mediated by the SMAD4 complex in response to TGF-beta signaling. Inhibits EP300-mediated acetylation of histone H3 at 'Lys-9'. Plays a role in regulating the transcription of AR targets. This chain is E3 SUMO-protein ligase ZNF451 (ZNF451), found in Homo sapiens (Human).